The primary structure comprises 196 residues: Carnitine operon protein CaiE (196 aa).

The disordered stretch occupies residues 173–196; that stretch reads TQPLRQMEENRPRLQGTTDVTPKR. Polar residues predominate over residues 187–196; sequence QGTTDVTPKR.

The protein belongs to the transferase hexapeptide repeat family.

It functions in the pathway amine and polyamine metabolism; carnitine metabolism. In terms of biological role, overproduction of CaiE stimulates the activity of CaiB and CaiD. The protein is Carnitine operon protein CaiE of Escherichia coli O127:H6 (strain E2348/69 / EPEC).